The sequence spans 420 residues: Glutamate-1-semialdehyde 2,1-aminomutase (420 aa).

An N6-(pyridoxal phosphate)lysine modification is found at K261.

The protein belongs to the class-III pyridoxal-phosphate-dependent aminotransferase family. HemL subfamily. Pyridoxal 5'-phosphate serves as cofactor.

The protein resides in the cytoplasm. The enzyme catalyses (S)-4-amino-5-oxopentanoate = 5-aminolevulinate. Its pathway is porphyrin-containing compound metabolism; protoporphyrin-IX biosynthesis; 5-aminolevulinate from L-glutamyl-tRNA(Glu): step 2/2. In Thermoplasma volcanium (strain ATCC 51530 / DSM 4299 / JCM 9571 / NBRC 15438 / GSS1), this protein is Glutamate-1-semialdehyde 2,1-aminomutase.